A 407-amino-acid chain; its full sequence is Argininosuccinate synthase (407 aa).

ATP-binding positions include 16 to 24 (AYSGGLDTS) and A44. The L-citrulline site is built by Y96 and S101. G126 lines the ATP pocket. 3 residues coordinate L-aspartate: T128, N132, and D133. An L-citrulline-binding site is contributed by N132. Residues R136, S185, S194, E270, and Y282 each contribute to the L-citrulline site.

This sequence belongs to the argininosuccinate synthase family. Type 1 subfamily. As to quaternary structure, homotetramer.

Its subcellular location is the cytoplasm. It carries out the reaction L-citrulline + L-aspartate + ATP = 2-(N(omega)-L-arginino)succinate + AMP + diphosphate + H(+). The protein operates within amino-acid biosynthesis; L-arginine biosynthesis; L-arginine from L-ornithine and carbamoyl phosphate: step 2/3. This is Argininosuccinate synthase from Shewanella frigidimarina (strain NCIMB 400).